Reading from the N-terminus, the 929-residue chain is Synaptopodin (929 aa).

Residue Met1 is modified to N-acetylmethionine. Pro residues predominate over residues 1 to 12 (MLGPHLPPPPLA). Residues 1 to 260 (MLGPHLPPPP…EASLLRHLEK (260 aa)) are disordered. 2 stretches are compositionally biased toward basic and acidic residues: residues 60–69 (GVSRSGDDSA) and 91–110 (SREE…DWDV). Residue Ser140 is modified to Phosphoserine. Residues 142–151 (TEKDLKEAKA) show a composition bias toward basic and acidic residues. Over residues 152–170 (RSQQIAAQLTTPPSSNSRG) the composition is skewed to polar residues. The residue at position 207 (Ser207) is a Phosphoserine. The span at 224–234 (EPGPPRHPSPQ) shows a compositional bias: pro residues. Ser263 is modified (phosphoserine). Residues 285–389 (GLHLSQNREA…TLCADGQPQA (105 aa)) are disordered. The segment covering 317–332 (LASPSATLTTPTSNSS) has biased composition (low complexity). Residue Asn330 is glycosylated (N-linked (GlcNAc...) asparagine). Positions 333–379 (HNPPATDVNQNPPATVVPQSLPLSSIQQNSSEAQLPSNGTGPASKPS) are enriched in polar residues. Phosphoserine occurs at positions 501 and 525. The tract at residues 509 to 558 (FGEKAPAPQPPSLPDRSPRPQRHIMSRSPMVERRMMGQRSPASERRPLGN) is disordered. Residue Thr560 is modified to Phosphothreonine. Residues 562-565 (PPTY) carry the PPxY motif motif. The residue at position 580 (Ser580) is a Phosphoserine. Residues 581-584 (PPSY) carry the PPxY motif motif. 2 disordered regions span residues 589 to 610 (PSSD…KTGI) and 630 to 726 (KPKV…KGAE). Residues 646 to 656 (ADEKRRQRDQG) are compositionally biased toward basic and acidic residues. Phosphoserine is present on residues Ser685, Ser702, and Tyr738. Residues 685 to 698 (SPAAAEEVVPEWAS) are compositionally biased toward low complexity. The tract at residues 740-763 (IESSSHTPELARCPSPTMSLPSSW) is disordered. Thr746 carries the post-translational modification Phosphothreonine. A phosphoserine mark is found at Ser754, Ser758, and Ser779. The residue at position 783 (Thr783) is a Phosphothreonine. Phosphoserine is present on residues Pro784, Thr804, Arg812, Lys826, Ser833, Ser854, Pro871, and Pro894. Residues 826–839 (KVSPRAASPAKPSS) are compositionally biased toward low complexity. The segment at 826 to 916 (KVSPRAASPA…RPSFSTRNAG (91 aa)) is disordered. A compositionally biased stretch (polar residues) spans 866–880 (GLYTSPGQDSLQPTA).

The protein belongs to the synaptopodin family. Interacts with BAIAP1. Interacts with actin. Interacts (via PPxY motifs) with WWC1 (via WW domains). Post-translationally, O-glycosylated. As to expression, expressed in cerebral cortex.

Its subcellular location is the cytoplasm. The protein resides in the cytoskeleton. It localises to the cell junction. The protein localises to the tight junction. It is found in the perikaryon. Its subcellular location is the cell projection. The protein resides in the dendritic spine. It localises to the postsynaptic density. The protein localises to the synapse. It is found in the cytosol. In terms of biological role, actin-associated protein that may play a role in modulating actin-based shape and motility of dendritic spines and renal podocyte foot processes. Seems to be essential for the formation of spine apparatuses in spines of telencephalic neurons, which is involved in synaptic plasticity. The protein is Synaptopodin (SYNPO) of Homo sapiens (Human).